Consider the following 544-residue polypeptide: CTP synthase (544 aa).

The segment at 1 to 265 (MTRYIFITGG…DTQVLAYFGL (265 aa)) is amidoligase domain. Residue Ser-13 participates in CTP binding. Ser-13 is a UTP binding site. 14–19 (SLGKGL) contacts ATP. Tyr-54 contributes to the L-glutamine binding site. Asp-71 lines the ATP pocket. Mg(2+) is bound by residues Asp-71 and Glu-139. CTP-binding positions include 146-148 (DIE), 186-191 (KTKPTQ), and Lys-222. UTP contacts are provided by residues 186-191 (KTKPTQ) and Lys-222. Residue Val-240 coordinates ATP. The Glutamine amidotransferase type-1 domain occupies 291 to 543 (TIAVVGKYTS…IKAAIEQSRL (253 aa)). Gly-353 provides a ligand contact to L-glutamine. Residue Cys-380 is the Nucleophile; for glutamine hydrolysis of the active site. Residues 381-384 (FGMQ), Glu-404, and Arg-472 each bind L-glutamine. Active-site residues include His-516 and Glu-518.

Belongs to the CTP synthase family. In terms of assembly, homotetramer.

The catalysed reaction is UTP + L-glutamine + ATP + H2O = CTP + L-glutamate + ADP + phosphate + 2 H(+). The enzyme catalyses L-glutamine + H2O = L-glutamate + NH4(+). It catalyses the reaction UTP + NH4(+) + ATP = CTP + ADP + phosphate + 2 H(+). It functions in the pathway pyrimidine metabolism; CTP biosynthesis via de novo pathway; CTP from UDP: step 2/2. Its activity is regulated as follows. Allosterically activated by GTP, when glutamine is the substrate; GTP has no effect on the reaction when ammonia is the substrate. The allosteric effector GTP functions by stabilizing the protein conformation that binds the tetrahedral intermediate(s) formed during glutamine hydrolysis. Inhibited by the product CTP, via allosteric rather than competitive inhibition. Catalyzes the ATP-dependent amination of UTP to CTP with either L-glutamine or ammonia as the source of nitrogen. Regulates intracellular CTP levels through interactions with the four ribonucleotide triphosphates. This chain is CTP synthase, found in Azospirillum brasilense.